Reading from the N-terminus, the 352-residue chain is Nicotinate-nucleotide--dimethylbenzimidazole phosphoribosyltransferase (352 aa).

Glu-316 acts as the Proton acceptor in catalysis.

Belongs to the CobT family.

The enzyme catalyses 5,6-dimethylbenzimidazole + nicotinate beta-D-ribonucleotide = alpha-ribazole 5'-phosphate + nicotinate + H(+). Its pathway is nucleoside biosynthesis; alpha-ribazole biosynthesis; alpha-ribazole from 5,6-dimethylbenzimidazole: step 1/2. In terms of biological role, catalyzes the synthesis of alpha-ribazole-5'-phosphate from nicotinate mononucleotide (NAMN) and 5,6-dimethylbenzimidazole (DMB). In Yersinia enterocolitica serotype O:8 / biotype 1B (strain NCTC 13174 / 8081), this protein is Nicotinate-nucleotide--dimethylbenzimidazole phosphoribosyltransferase.